A 250-amino-acid polypeptide reads, in one-letter code: Probable aquaporin TIP2-2 (250 aa).

Position 1 is an N-acetylmethionine (Met-1). Residues 1–24 are Cytoplasmic-facing; the sequence is MVKIEIGSVGDSFSVASLKAYLSE. At Lys-3 the chain carries N6,N6-dimethyllysine. A helical membrane pass occupies residues 25-45; sequence FIATLLFVFAGVGSALAFAKL. The Vacuolar segment spans residues 46–53; it reads TSDAALDP. A helical membrane pass occupies residues 54-74; it reads AGLVAVAVAHAFALFVGVSIA. The Cytoplasmic portion of the chain corresponds to 75 to 101; it reads ANISGGHLNPAVTLGLAVGGNITVITG. The NPA 1 signature appears at 83–85; sequence NPA. Residues 102-122 traverse the membrane as a helical segment; that stretch reads FFYWIAQCLGSIVACLLLVFV. At 123–133 the chain is on the vacuolar side; that stretch reads TNGESVPTHGV. Residues 134–154 traverse the membrane as a helical segment; sequence AAGLGAIEGVVMEIVVTFALV. Residues 155–168 are Cytoplasmic-facing; sequence YTVYATAADPKKGS. The chain crosses the membrane as a helical span at residues 169-189; it reads LGTIAPIAIGFIVGANILAAG. Topologically, residues 190-210 are vacuolar; the sequence is PFSGGSMNPARSFGPAVVSGD. An NPA 2 motif is present at residues 197-199; that stretch reads NPA. A helical membrane pass occupies residues 211–231; that stretch reads FSQIWIYWVGPLVGGALAGLI. The Cytoplasmic portion of the chain corresponds to 232–250; it reads YGDVFIGSYAPAPTTESYP. Phosphoserine is present on Ser-248.

This sequence belongs to the MIP/aquaporin (TC 1.A.8) family. TIP (TC 1.A.8.10) subfamily. In terms of assembly, interacts with cucumber mosaic virus (CMV) Protein 1a. In terms of tissue distribution, expressed above groung and in roots.

Its subcellular location is the vacuole membrane. In terms of biological role, aquaporins facilitate the transport of water and small neutral solutes across cell membranes. In Arabidopsis thaliana (Mouse-ear cress), this protein is Probable aquaporin TIP2-2 (TIP2-2).